The following is a 1010-amino-acid chain: Eukaryotic translation initiation factor 4E transporter (1010 aa).

Positions tyrosine 10 to leucine 16 match the YXXXXLphi motif motif. Disordered regions lie at residues glycine 154–serine 182, proline 196–glutamate 277, tyrosine 289–glycine 320, asparagine 354–serine 391, and glutamine 921–serine 960. The span at cysteine 201–serine 211 shows a compositional bias: polar residues. Residues aspartate 227 to threonine 247 show a composition bias toward basic and acidic residues. A compositionally biased stretch (polar residues) spans serine 248–glutamine 263. 2 stretches are compositionally biased toward basic and acidic residues: residues asparagine 354–asparagine 364 and lysine 372–serine 384. Residues serine 934–tyrosine 953 show a composition bias toward polar residues.

Belongs to the 4E-T/EIF4E-T family. Interacts (via YXXXXLphi motif) with eIF4E1. Interacts with DDX6/me31B. Expressed in all larval and adult organs and tissues, with highest levels in the ovary.

The protein resides in the cytoplasm. The protein localises to the P-body. It localises to the nucleus. In terms of biological role, eIF4E1-binding protein that regulates translation and stability of mRNAs in processing bodies (P-bodies). Probably plays a role in P-bodies to coordinate the storage of translationally inactive mRNAs in the cytoplasm and prevent their degradation. Acts as a binding platform for multiple RNA-binding proteins. Required for the formation of P-bodies. This is Eukaryotic translation initiation factor 4E transporter from Drosophila melanogaster (Fruit fly).